A 405-amino-acid polypeptide reads, in one-letter code: Tryptophan synthase beta chain (405 aa).

N6-(pyridoxal phosphate)lysine is present on Lys98.

Belongs to the TrpB family. Tetramer of two alpha and two beta chains. Requires pyridoxal 5'-phosphate as cofactor.

It catalyses the reaction (1S,2R)-1-C-(indol-3-yl)glycerol 3-phosphate + L-serine = D-glyceraldehyde 3-phosphate + L-tryptophan + H2O. It functions in the pathway amino-acid biosynthesis; L-tryptophan biosynthesis; L-tryptophan from chorismate: step 5/5. The beta subunit is responsible for the synthesis of L-tryptophan from indole and L-serine. The protein is Tryptophan synthase beta chain of Stenotrophomonas maltophilia (strain K279a).